The following is a 342-amino-acid chain: MTNLTLALDAMGGDHGPHVTVPAALRALQLHSFLKIILVGDKTEIDVYLRQAEANLLSRIEIIHTDEVVSMSDRPVHALRTRKNSSMRLAIELVRDDRAQACVSAGNTGALMAMAKVLLKTLPGVDRPALVSCLPAVTQKPVYLLDLGANISCDSETLFQFAVMGSVLCEAVDKKSRPKVALLNVGIEEIKGNDQVQQAAQLLQHTDQINYTGFIEGDEIYSGNVDVIVCDGFVGNITLKTSEGIAKLLVHQLKRGLTQGLFVRFLAKLIAPRIQAVLSQMNPDHYNGASLIGLRGIVVKSHGNADETAYLQAISLAVTEAQRRLPEMIKDRLESILLDINN.

Belongs to the PlsX family. Homodimer. Probably interacts with PlsY.

It is found in the cytoplasm. It carries out the reaction a fatty acyl-[ACP] + phosphate = an acyl phosphate + holo-[ACP]. Its pathway is lipid metabolism; phospholipid metabolism. Functionally, catalyzes the reversible formation of acyl-phosphate (acyl-PO(4)) from acyl-[acyl-carrier-protein] (acyl-ACP). This enzyme utilizes acyl-ACP as fatty acyl donor, but not acyl-CoA. This Shewanella baltica (strain OS155 / ATCC BAA-1091) protein is Phosphate acyltransferase.